The following is a 330-amino-acid chain: Ketol-acid reductoisomerase (NADP(+)) (330 aa).

The KARI N-terminal Rossmann domain occupies 1–181; sequence MNVYYEQDAD…GGAKAGVIET (181 aa). NADP(+)-binding positions include 24–27, R47, S50, S52, and 82–85; these read YGSQ and DQYQ. Residue H107 is part of the active site. G133 lines the NADP(+) pocket. One can recognise a KARI C-terminal knotted domain in the interval 182 to 327; the sequence is TIKDETETDL…AKLRNMMSWL (146 aa). Residues D190, E194, E226, and E230 each contribute to the Mg(2+) site. A substrate-binding site is contributed by S251.

The protein belongs to the ketol-acid reductoisomerase family. Mg(2+) is required as a cofactor.

It carries out the reaction (2R)-2,3-dihydroxy-3-methylbutanoate + NADP(+) = (2S)-2-acetolactate + NADPH + H(+). The enzyme catalyses (2R,3R)-2,3-dihydroxy-3-methylpentanoate + NADP(+) = (S)-2-ethyl-2-hydroxy-3-oxobutanoate + NADPH + H(+). It participates in amino-acid biosynthesis; L-isoleucine biosynthesis; L-isoleucine from 2-oxobutanoate: step 2/4. It functions in the pathway amino-acid biosynthesis; L-valine biosynthesis; L-valine from pyruvate: step 2/4. In terms of biological role, involved in the biosynthesis of branched-chain amino acids (BCAA). Catalyzes an alkyl-migration followed by a ketol-acid reduction of (S)-2-acetolactate (S2AL) to yield (R)-2,3-dihydroxy-isovalerate. In the isomerase reaction, S2AL is rearranged via a Mg-dependent methyl migration to produce 3-hydroxy-3-methyl-2-ketobutyrate (HMKB). In the reductase reaction, this 2-ketoacid undergoes a metal-dependent reduction by NADPH to yield (R)-2,3-dihydroxy-isovalerate. The polypeptide is Ketol-acid reductoisomerase (NADP(+)) (Prosthecochloris aestuarii (strain DSM 271 / SK 413)).